Consider the following 1217-residue polypeptide: Nuclear matrix constituent protein 1 (1217 aa).

Polar residues predominate over residues 1-14; that stretch reads MLTPQRSAWSLKSK. A disordered region spans residues 1–45; that stretch reads MLTPQRSAWSLKSKVSSEKPRSKGKGITKNLDSAATPFPPLGLLN. Residues 159–746 adopt a coiled-coil conformation; the sequence is VTDLEKALRE…KNQRAEFIKE (588 aa). Positions 892-904 are enriched in low complexity; sequence SEDAAANDNNPAA. Disordered stretches follow at residues 892–969, 981–1057, 1087–1117, and 1152–1217; these read SEDA…VVDD, EEAK…VQAP, VQTKASHQASHDNNQISMGDDPALEGSHKVT, and ISEM…FFTT. Residues 947-960 show a composition bias toward basic residues; sequence STRRGRGGKTVRRT. 2 stretches are compositionally biased toward polar residues: residues 986–1007 and 1087–1103; these read SSQQNDEQSQGASVHTGGTSNT and VQTKASHQASHDNNQIS. Over residues 1173-1186 the composition is skewed to low complexity; sequence EEPATPSSGSSTSG. Over residues 1189–1200 the composition is skewed to acidic residues; the sequence is GNDDDMDDDDEE.

Belongs to the CRWN family.

The protein resides in the nucleus matrix. Its subcellular location is the nucleus lamina. In terms of biological role, architectural component of nuclear structure that plays different roles in controlling nuclear size and morphology. Involved in the organization of multimeric complexes in the peripheral nucleoskeleton. This Allium cepa (Onion) protein is Nuclear matrix constituent protein 1.